A 202-amino-acid chain; its full sequence is D-alanyl-D-alanine dipeptidase (202 aa).

Zn(2+) contacts are provided by histidine 116 and aspartate 123. Catalysis depends on glutamate 181, which acts as the Proton donor/acceptor. Position 184 (histidine 184) interacts with Zn(2+).

This sequence belongs to the peptidase M15D family. Homodimer. Zn(2+) serves as cofactor. It depends on Fe(2+) as a cofactor. Requires Co(2+) as cofactor. The cofactor is Ni(2+).

It catalyses the reaction D-alanyl-D-alanine + H2O = 2 D-alanine. Its activity is regulated as follows. Inhibited by aminoalkyl phosphinate analogs. In terms of biological role, catalyzes hydrolysis of the D-alanyl-D-alanine dipeptide. In Enterococcus faecium (Streptococcus faecium), this protein is D-alanyl-D-alanine dipeptidase (vanX).